The primary structure comprises 259 residues: UDP-2,3-diacylglucosamine hydrolase (259 aa).

Residues Asp8, His10, Asp41, Asn79, and His114 each coordinate Mn(2+). 79–80 is a substrate binding site; sequence NR. The substrate site is built by Asp122, Ser160, Asn164, Lys167, and His195. Mn(2+) is bound by residues His195 and His197.

It belongs to the LpxH family. It depends on Mn(2+) as a cofactor.

Its subcellular location is the cell inner membrane. It carries out the reaction UDP-2-N,3-O-bis[(3R)-3-hydroxytetradecanoyl]-alpha-D-glucosamine + H2O = 2-N,3-O-bis[(3R)-3-hydroxytetradecanoyl]-alpha-D-glucosaminyl 1-phosphate + UMP + 2 H(+). Its pathway is glycolipid biosynthesis; lipid IV(A) biosynthesis; lipid IV(A) from (3R)-3-hydroxytetradecanoyl-[acyl-carrier-protein] and UDP-N-acetyl-alpha-D-glucosamine: step 4/6. Functionally, hydrolyzes the pyrophosphate bond of UDP-2,3-diacylglucosamine to yield 2,3-diacylglucosamine 1-phosphate (lipid X) and UMP by catalyzing the attack of water at the alpha-P atom. Involved in the biosynthesis of lipid A, a phosphorylated glycolipid that anchors the lipopolysaccharide to the outer membrane of the cell. In Edwardsiella ictaluri (strain 93-146), this protein is UDP-2,3-diacylglucosamine hydrolase.